Reading from the N-terminus, the 291-residue chain is Lys-63-specific deubiquitinase BRCC36 (291 aa).

N-acetylalanine is present on Ala2. Positions 12–179 (VHLESDAFLV…YTCFQSIQAQ (168 aa)) constitute an MPN domain. Positions 122, 124, and 135 each coordinate Zn(2+). A JAMM motif motif is present at residues 122-135 (HSHPHITVWPSHVD). Ser233 bears the Phosphoserine mark.

Belongs to the peptidase M67A family. BRCC36 subfamily. As to quaternary structure, component of the ARISC complex, at least composed of UIMC1/RAP80, ABRAXAS1, BRCC3/BRCC36, BABAM2 and BABAM1/NBA1. Component of the BRCA1-A complex, at least composed of BRCA1, BARD1, UIMC1/RAP80, ABRAXAS1, BRCC3/BRCC36, BABAM2 and BABAM1/NBA1. In the BRCA1-A complex, interacts directly with ABRAXAS1 and BABAM2. Component of the BRISC complex, at least composed of ABRAXAS2, BRCC3/BRCC36, BABAM2 and BABAM1/NBA1. Identified in a complex with SHMT2 and the other subunits of the BRISC complex. In the BRISC complex, interacts directly with ABRAXAS2. Identified in a complex with ABRAXAS2 and NUMA1. The BRISC complex interacts with the CSN complex. Component of the BRCA1/BRCA2 containing complex (BRCC), which also contains BRCA1, BRCA2, BARD1, BABAM2 and RAD51. BRCC is a ubiquitin E3 ligase complex that enhances cellular survival following DNA damage. Interacts with BRCA1. Binds polyubiquitin. Interacts with PWWP2B. Interacts with HDAC1; this interaction is enhanced in the presence of PWWP2B. Zn(2+) serves as cofactor.

It is found in the nucleus. The protein resides in the cytoplasm. Its subcellular location is the cytoskeleton. The protein localises to the spindle pole. Metalloprotease that specifically cleaves 'Lys-63'-linked polyubiquitin chains. Does not have activity toward 'Lys-48'-linked polyubiquitin chains. Component of the BRCA1-A complex, a complex that specifically recognizes 'Lys-63'-linked ubiquitinated histones H2A and H2AX at DNA lesions sites, leading to target the BRCA1-BARD1 heterodimer to sites of DNA damage at double-strand breaks (DSBs). In the BRCA1-A complex, it specifically removes 'Lys-63'-linked ubiquitin on histones H2A and H2AX, antagonizing the RNF8-dependent ubiquitination at double-strand breaks (DSBs). Catalytic subunit of the BRISC complex, a multiprotein complex that specifically cleaves 'Lys-63'-linked ubiquitin in various substrates. Mediates the specific 'Lys-63'-specific deubiquitination associated with the COP9 signalosome complex (CSN), via the interaction of the BRISC complex with the CSN complex. The BRISC complex is required for normal mitotic spindle assembly and microtubule attachment to kinetochores via its role in deubiquitinating NUMA1. Plays a role in interferon signaling via its role in the deubiquitination of the interferon receptor IFNAR1; deubiquitination increases IFNAR1 activity by enhancing its stability and cell surface expression. Acts as a regulator of the NLRP3 inflammasome by mediating deubiquitination of NLRP3, leading to NLRP3 inflammasome assembly. Down-regulates the response to bacterial lipopolysaccharide (LPS) via its role in IFNAR1 deubiquitination. Deubiquitinates HDAC1 and PWWP2B leading to their stabilization. The protein is Lys-63-specific deubiquitinase BRCC36 (Brcc3) of Mus musculus (Mouse).